A 403-amino-acid chain; its full sequence is Probable eukaryotic initiation factor 4A (403 aa).

The disordered stretch occupies residues 1-29; it reads MSQQDRVAPQDQDSFLDDQPGVRPIPSFD. Positions 26-54 match the Q motif motif; sequence PSFDDMPLHQNLLRGIYSYGFEKPSSIQQ. In terms of domain architecture, Helicase ATP-binding spans 57–230; it reads IAPFTRGGDI…KKFMRDPVRI (174 aa). 70–77 is a binding site for ATP; that stretch reads AQSGTGKT. A DEAD box motif is present at residues 178–181; the sequence is DEAD. The Helicase C-terminal domain maps to 241–401; the sequence is GIKQFFIAVE…ELPVDFAAYL (161 aa).

Belongs to the DEAD box helicase family. eIF4A subfamily. EIF4F is a multi-subunit complex, the composition of which varies with external and internal environmental conditions. It is composed of at least EIF4A, EIF4E and EIF4G.

It catalyses the reaction ATP + H2O = ADP + phosphate + H(+). In terms of biological role, ATP-dependent RNA helicase which is a subunit of the eIF4F complex involved in cap recognition and is required for mRNA binding to ribosome. In the current model of translation initiation, eIF4A unwinds RNA secondary structures in the 5'-UTR of mRNAs which is necessary to allow efficient binding of the small ribosomal subunit, and subsequent scanning for the initiator codon. The sequence is that of Probable eukaryotic initiation factor 4A from Leishmania braziliensis.